Reading from the N-terminus, the 688-residue chain is Glycine--tRNA ligase beta subunit (688 aa).

The protein belongs to the class-II aminoacyl-tRNA synthetase family. In terms of assembly, tetramer of two alpha and two beta subunits.

The protein resides in the cytoplasm. The catalysed reaction is tRNA(Gly) + glycine + ATP = glycyl-tRNA(Gly) + AMP + diphosphate. The sequence is that of Glycine--tRNA ligase beta subunit from Actinobacillus pleuropneumoniae serotype 7 (strain AP76).